Consider the following 180-residue polypeptide: Segregation and condensation protein B (180 aa).

It belongs to the ScpB family. Homodimer. Homodimerization may be required to stabilize the binding of ScpA to the Smc head domains. Component of a cohesin-like complex composed of ScpA, ScpB and the Smc homodimer, in which ScpA and ScpB bind to the head domain of Smc. The presence of the three proteins is required for the association of the complex with DNA.

It localises to the cytoplasm. Its function is as follows. Participates in chromosomal partition during cell division. May act via the formation of a condensin-like complex containing Smc and ScpA that pull DNA away from mid-cell into both cell halves. The protein is Segregation and condensation protein B of Staphylococcus aureus (strain USA300).